The following is a 272-amino-acid chain: Homeobox protein Hox-D12 (272 aa).

A DNA-binding region (homeobox) is located at residues 204–263 (SRRKRKPYTKQQIAELENEFLANEFINRQKRKELSDRLNLSDQQVKIWFQNRRMKKKRLV).

This sequence belongs to the Abd-B homeobox family.

It localises to the nucleus. In terms of biological role, sequence-specific transcription factor which is part of a developmental regulatory system that provides cells with specific positional identities on the anterior-posterior axis. This chain is Homeobox protein Hox-D12 (HOXD12), found in Heterodontus francisci (Horn shark).